Here is a 380-residue protein sequence, read N- to C-terminus: Probable inactive reductase easA (380 aa).

FMN is bound by residues 25 to 27 (PMT), A60, Q102, and H171. Substrate-binding residues include H171 and N174. FMN contacts are provided by residues K223, G299, 324–325 (GR), and R325. Y352 contacts substrate.

This sequence belongs to the NADH:flavin oxidoreductase/NADH oxidase family.

In terms of biological role, probable inactive dehydrogenase; part of the gene cluster that mediates the biosynthesis of fungal ergot alkaloid ergovaline, the predominant ergopeptine product in E.festucae var. lolii. DmaW catalyzes the first step of ergot alkaloid biosynthesis by condensing dimethylallyl diphosphate (DMAP) and tryptophan to form 4-dimethylallyl-L-tryptophan. The second step is catalyzed by the methyltransferase easF that methylates 4-dimethylallyl-L-tryptophan in the presence of S-adenosyl-L-methionine, resulting in the formation of 4-dimethylallyl-L-abrine. The catalase easC and the FAD-dependent oxidoreductase easE then transform 4-dimethylallyl-L-abrine to chanoclavine-I which is further oxidized by easD in the presence of NAD(+), resulting in the formation of chanoclavine-I aldehyde. Agroclavine dehydrogenase easG then mediates the conversion of chanoclavine-I aldehyde to agroclavine via a non-enzymatic adduct reaction: the substrate is an iminium intermediate that is formed spontaneously from chanoclavine-I aldehyde in the presence of glutathione. The presence of easA is not required to complete this reaction. Further conversion of agroclavine to paspalic acid is a two-step process involving oxidation of agroclavine to elymoclavine and of elymoclavine to paspalic acid, the second step being performed by the elymoclavine oxidase cloA. Paspalic acid is then further converted to D-lysergic acid. Ergovaline is assembled from D-lysergic acid and three different amino acids by the D-lysergyl-peptide-synthetase composed of a monomudular (lpsB) and a trimodular (lpsA) nonribosomal peptide synthetase subunit. The chain is Probable inactive reductase easA from Epichloe festucae var. lolii (Neotyphodium lolii).